The sequence spans 583 residues: Threonine--tRNA ligase (583 aa).

The interval 185 to 478 (DHRKLGRELD…LVEHYGGAFP (294 aa)) is catalytic. Residues cysteine 278, histidine 329, and histidine 455 each coordinate Zn(2+).

The protein belongs to the class-II aminoacyl-tRNA synthetase family. Homodimer. Zn(2+) is required as a cofactor.

It is found in the cytoplasm. The catalysed reaction is tRNA(Thr) + L-threonine + ATP = L-threonyl-tRNA(Thr) + AMP + diphosphate + H(+). Functionally, catalyzes the attachment of threonine to tRNA(Thr) in a two-step reaction: L-threonine is first activated by ATP to form Thr-AMP and then transferred to the acceptor end of tRNA(Thr). Also edits incorrectly charged L-seryl-tRNA(Thr). This is Threonine--tRNA ligase from Borrelia hermsii (strain HS1 / DAH).